The following is a 127-amino-acid chain: UPF0325 protein VV1_1856 (127 aa).

It belongs to the UPF0325 family.

The protein is UPF0325 protein VV1_1856 of Vibrio vulnificus (strain CMCP6).